A 163-amino-acid chain; its full sequence is Nucleotide-binding protein APL_1231 (163 aa).

This sequence belongs to the YajQ family.

Its function is as follows. Nucleotide-binding protein. The sequence is that of Nucleotide-binding protein APL_1231 from Actinobacillus pleuropneumoniae serotype 5b (strain L20).